Consider the following 513-residue polypeptide: Ribonuclease Y (513 aa).

Residues 6 to 26 (YIIIAVVIIIICVILGLYVVD) traverse the membrane as a helical segment. The interval 35-59 (EASKEARRLKEEAERDAEAKKKEAI) is disordered. A KH domain is found at 203-288 (TVHVVNLPND…EMVEKAKKEV (86 aa)). Positions 329-422 (VLKHSIEVSH…VQAADAISAA (94 aa)) constitute an HD domain.

The protein belongs to the RNase Y family.

Its subcellular location is the cell membrane. Its function is as follows. Endoribonuclease that initiates mRNA decay. This Clostridium botulinum (strain Okra / Type B1) protein is Ribonuclease Y.